The chain runs to 447 residues: Zinc finger protein ZIC 1 (447 aa).

Residues 225-260 form a C2H2-type 1; atypical zinc finger; the sequence is LICKWIEPEQLANPKKSCNKTFSTMHELVTHVTVEH. The segment at 269–296 adopts a C2H2-type 2; atypical zinc-finger fold; that stretch reads HICFWEECPREGKPFKAKYKLVNHIRVH. 3 consecutive C2H2-type zinc fingers follow at residues 302 to 326, 332 to 356, and 362 to 384; these read FPCP…KRTH, FKCE…MHVH, and YLCK…MKVH. The tract at residues 375-434 is disordered; it reads SSLRKHMKVHESSSQGSQPSPAASSGYESSTPPTIVSPTTDNPTTSSMSPSSSAVHHTAG. A compositionally biased stretch (low complexity) spans 386–427; it reads SSSQGSQPSPAASSGYESSTPPTIVSPTTDNPTTSSMSPSSS.

The protein belongs to the GLI C2H2-type zinc-finger protein family. As to quaternary structure, interacts (via the C2H2-type domains 3, 4 and 5) with MDFIC (via the C2H2-type domains 3, 4 and 5). Interacts with GLI1; the interaction enhances transcription activation. Interacts with GLI2. Interacts with GLI3; the interaction enhances transcription activation. As to expression, expressed in osteoblasts (at protein level). Expressed in the CNS. A high level expression is seen in the cerebellum, while a low level expression is seen in the olfactory bulb, diencephalon, and brainstem. Expressed in lumbar spine and iliac crest.

The protein resides in the nucleus. It is found in the cytoplasm. Acts as a transcriptional activator. Involved in neurogenesis. Plays important roles in the early stage of organogenesis of the CNS, as well as during dorsal spinal cord development and maturation of the cerebellum. Involved in the spatial distribution of mossy fiber (MF) neurons within the pontine gray nucleus (PGN). Plays a role in the regulation of MF axon pathway choice. Promotes MF migration towards ipsilaterally-located cerebellar territories. May have a role in shear flow mechanotransduction in osteocytes. Retains nuclear GLI1 and GLI3 in the cytoplasm. Binds to the minimal GLI-consensus sequence 5'-TGGGTGGTC-3'. The chain is Zinc finger protein ZIC 1 (Zic1) from Mus musculus (Mouse).